Consider the following 519-residue polypeptide: Sensor protein RprX (519 aa).

The next 2 membrane-spanning stretches (helical) occupy residues 5–25 and 260–280; these read TIWI…YLQV and IPSM…IYIV. Positions 296 to 517 constitute a Histidine kinase domain; that stretch reads NMTHEFKTPI…KFIIALPLLK (222 aa). Position 299 is a phosphohistidine; by autocatalysis (His-299).

The protein resides in the cell membrane. The enzyme catalyses ATP + protein L-histidine = ADP + protein N-phospho-L-histidine.. In terms of biological role, member of the two-component regulatory system RprX/RprY. May activate RprY by phosphorylation. The protein is Sensor protein RprX (rprX) of Bacteroides fragilis (strain YCH46).